The primary structure comprises 20 residues: Ribulose bisphosphate carboxylase small subunit (20 aa).

It belongs to the RuBisCO small chain family. Heterohexadecamer of 8 large and 8 small subunits.

The protein resides in the plastid. The protein localises to the chloroplast. RuBisCO catalyzes two reactions: the carboxylation of D-ribulose 1,5-bisphosphate, the primary event in carbon dioxide fixation, as well as the oxidative fragmentation of the pentose substrate in the photorespiration process. Both reactions occur simultaneously and in competition at the same active site. Although the small subunit is not catalytic it is essential for maximal activity. The sequence is that of Ribulose bisphosphate carboxylase small subunit from Chattonella marina var. antiqua (Red tide flagellate).